The chain runs to 224 residues: CRIB domain-containing protein RIC1 (224 aa).

The region spanning 29 to 42 (IGFPTDVKHVAHIG) is the CRIB domain. The interval 38–224 (VAHIGSDGPT…SVDTTCNDII (187 aa)) is disordered. Composition is skewed to polar residues over residues 69–84 (SRGN…TNQR), 114–132 (PNHN…ASSD), 144–155 (AHGSTDSSNDQE), and 215–224 (SVDTTCNDII).

In terms of assembly, interacts with ARAC11/ROP1. In terms of tissue distribution, expressed in columella cells from the root tip and epidermal cells at the base of lateral roots, leaves, stems, flowers, anthers, pollen and siliques.

The protein localises to the cytoplasm. The protein resides in the cytoskeleton. Functionally, functions as a downstream effector of Rho-related GTP binding proteins of the 'Rho of Plants' (ROPs) family. Participates in the propagation of ROP GTPase signals in specific cellular responses. Required for cortical microtubule organization. Promotes microtubule bundling and formation of well-ordered microtubule arrays in the neck region of pavement cells. This restricts cell lateral expansion to generate the narrow neck morphology of pavement cells. Its function is inhibited when it interacts with activated ARAC4/ROP2. Represses ARAC4/ROP2 activation and antagonizes the RIC4-actin pathway that promotes the assembly of cortical actin microfilaments. Acts as a downstream effector of ARAC3/ROP6 which functions in a signaling pathway that negatively regulates clathrin-mediated endocytosis and internalization of PIN1 and PIN2. Required for the asymmetric auxin distribution during root gravitropism and vascular patterning. Positively regulates auxin responses, but negatively regulates ABA responses during lateral root development and primary root elongation. This chain is CRIB domain-containing protein RIC1 (RIC1), found in Arabidopsis thaliana (Mouse-ear cress).